An 870-amino-acid polypeptide reads, in one-letter code: Lon protease (870 aa).

The Lon N-terminal domain occupies 1–270 (MPTNSYRFLV…KLYEHIHTFA (270 aa)). An ATP-binding site is contributed by 454-461 (GPPGTGKT). The Lon proteolytic domain maps to 691-870 (SPQIGTVTGL…YQQIYDFIFK (180 aa)). Residues S777 and K820 contribute to the active site.

This sequence belongs to the peptidase S16 family. Homohexamer. Organized in a ring with a central cavity.

It is found in the cytoplasm. The catalysed reaction is Hydrolysis of proteins in presence of ATP.. ATP-dependent serine protease that mediates the selective degradation of mutant and abnormal proteins as well as certain short-lived regulatory proteins. Required for cellular homeostasis and for survival from DNA damage and developmental changes induced by stress. Degrades polypeptides processively to yield small peptide fragments that are 5 to 10 amino acids long. Binds to DNA in a double-stranded, site-specific manner. This is Lon protease from Mesomycoplasma hyopneumoniae (strain 232) (Mycoplasma hyopneumoniae).